The following is a 481-amino-acid chain: CUGBP Elav-like family member 6 (481 aa).

A compositionally biased stretch (low complexity) spans 1-12 (MAAAPGGSAQPA). The disordered stretch occupies residues 1–34 (MAAAPGGSAQPAGPGPRLGFSTADSGVGMSGLNP). RRM domains follow at residues 46–127 (IKLF…PAAS), 134–214 (RKLF…LADT), and 396–474 (CNLF…LKRP).

The protein belongs to the CELF/BRUNOL family. As to expression, expressed mainly in kidney, brain and testis and present in other tissues albeit at lower levels. Also expressed in fetal kidney.

The protein localises to the nucleus. The protein resides in the cytoplasm. Functionally, RNA-binding protein implicated in the regulation of pre-mRNA alternative splicing. Mediates exon inclusion and/or exclusion in pre-mRNA that are subject to tissue-specific and developmentally regulated alternative splicing. Specifically activates exon 5 inclusion of TNNT2 in a muscle-specific splicing enhancer (MSE)-dependent manner. Promotes also exon exclusion of INSR pre-mRNA. The sequence is that of CUGBP Elav-like family member 6 (CELF6) from Homo sapiens (Human).